A 278-amino-acid polypeptide reads, in one-letter code: Truncated FRIGIDA-like protein 1 (278 aa).

The stretch at 1-36 (MTASETIATAINQIDEKKEKLKKAFDDLQAHRSLLS) forms a coiled coil.

It belongs to the Frigida family.

Truncated inactive FRIGIDA-like 1 protein. This Arabidopsis thaliana (Mouse-ear cress) protein is Truncated FRIGIDA-like protein 1 (FRL1).